The following is an 884-amino-acid chain: Alanine--tRNA ligase (884 aa).

4 residues coordinate Zn(2+): histidine 570, histidine 574, cysteine 676, and histidine 680.

The protein belongs to the class-II aminoacyl-tRNA synthetase family. It depends on Zn(2+) as a cofactor.

It localises to the cytoplasm. It carries out the reaction tRNA(Ala) + L-alanine + ATP = L-alanyl-tRNA(Ala) + AMP + diphosphate. In terms of biological role, catalyzes the attachment of alanine to tRNA(Ala) in a two-step reaction: alanine is first activated by ATP to form Ala-AMP and then transferred to the acceptor end of tRNA(Ala). Also edits incorrectly charged Ser-tRNA(Ala) and Gly-tRNA(Ala) via its editing domain. The protein is Alanine--tRNA ligase of Lawsonia intracellularis (strain PHE/MN1-00).